A 113-amino-acid polypeptide reads, in one-letter code: Na(+)/H(+) antiporter subunit C1 (113 aa).

Transmembrane regions (helical) follow at residues 1–21 (MEII…YLVL), 28–48 (IVMG…TMGG), and 72–92 (LILT…VLAF).

The protein belongs to the CPA3 antiporters (TC 2.A.63) subunit C family. In terms of assembly, may form a heterooligomeric complex that consists of seven subunits: mnhA1, mnhB1, mnhC1, mnhD1, mnhE1, mnhF1 and mnhG1.

The protein resides in the cell membrane. Its function is as follows. Mnh complex is a Na(+)/H(+) antiporter involved in Na(+) excretion. The protein is Na(+)/H(+) antiporter subunit C1 (mnhC1) of Staphylococcus haemolyticus (strain JCSC1435).